Reading from the N-terminus, the 146-residue chain is Ribonuclease VapC41 (146 aa).

Residues L3 to R142 form the PINc domain. Residues D5 and D112 each coordinate Mg(2+).

Belongs to the PINc/VapC protein family. The cofactor is Mg(2+).

Functionally, toxic component of a type II toxin-antitoxin (TA) system. An RNase. Its toxic effect is neutralized by coexpression with cognate antitoxin VapB41. This is Ribonuclease VapC41 from Mycobacterium tuberculosis (strain CDC 1551 / Oshkosh).